We begin with the raw amino-acid sequence, 217 residues long: ATP phosphoribosyltransferase (217 aa).

This sequence belongs to the ATP phosphoribosyltransferase family. Short subfamily. Heteromultimer composed of HisG and HisZ subunits.

It is found in the cytoplasm. The catalysed reaction is 1-(5-phospho-beta-D-ribosyl)-ATP + diphosphate = 5-phospho-alpha-D-ribose 1-diphosphate + ATP. Its pathway is amino-acid biosynthesis; L-histidine biosynthesis; L-histidine from 5-phospho-alpha-D-ribose 1-diphosphate: step 1/9. Functionally, catalyzes the condensation of ATP and 5-phosphoribose 1-diphosphate to form N'-(5'-phosphoribosyl)-ATP (PR-ATP). Has a crucial role in the pathway because the rate of histidine biosynthesis seems to be controlled primarily by regulation of HisG enzymatic activity. The protein is ATP phosphoribosyltransferase of Burkholderia vietnamiensis (strain G4 / LMG 22486) (Burkholderia cepacia (strain R1808)).